A 279-amino-acid chain; its full sequence is Peptide deformylase 1B, chloroplastic (279 aa).

Fe cation-binding residues include Cys-177 and His-219. Glu-220 is an active-site residue. A Fe cation-binding site is contributed by His-223.

This sequence belongs to the polypeptide deformylase family. It depends on Fe(2+) as a cofactor.

The protein localises to the plastid. It localises to the chloroplast. It catalyses the reaction N-terminal N-formyl-L-methionyl-[peptide] + H2O = N-terminal L-methionyl-[peptide] + formate. Removes the formyl group from the N-terminal Met of newly synthesized proteins. The protein is Peptide deformylase 1B, chloroplastic (PDF1B) of Solanum lycopersicum (Tomato).